A 198-amino-acid polypeptide reads, in one-letter code: dTTP/UTP pyrophosphatase (198 aa).

The active-site Proton acceptor is Asp69.

This sequence belongs to the Maf family. YhdE subfamily. It depends on a divalent metal cation as a cofactor.

It is found in the cytoplasm. The catalysed reaction is dTTP + H2O = dTMP + diphosphate + H(+). It catalyses the reaction UTP + H2O = UMP + diphosphate + H(+). Its function is as follows. Nucleoside triphosphate pyrophosphatase that hydrolyzes dTTP and UTP. May have a dual role in cell division arrest and in preventing the incorporation of modified nucleotides into cellular nucleic acids. The chain is dTTP/UTP pyrophosphatase from Idiomarina loihiensis (strain ATCC BAA-735 / DSM 15497 / L2-TR).